The following is a 292-amino-acid chain: Protease HtpX homolog (292 aa).

2 consecutive transmembrane segments (helical) span residues 7–27 and 29–49; these read TFIL…LIGG and GGAV…WWNS. Residue His131 coordinates Zn(2+). Glu132 is an active-site residue. His135 is a binding site for Zn(2+). 2 consecutive transmembrane segments (helical) span residues 148-168 and 178-198; these read ATMA…SMFG and LAAI…QMAI. Glu203 contacts Zn(2+).

It belongs to the peptidase M48B family. It depends on Zn(2+) as a cofactor.

It localises to the cell inner membrane. This Paracoccus denitrificans (strain Pd 1222) protein is Protease HtpX homolog.